The primary structure comprises 266 residues: Undecaprenyl-diphosphatase (266 aa).

8 helical membrane passes run 1–21, 39–59, 87–107, 111–131, 144–164, 183–203, 218–238, and 246–266; these read MDTFQVIILALIQGLTEFLPI, QGLSFDVAVNTGSLLAVVMYF, WWIILATIPAVIVGFTAKGFI, LRNIEVIAATTIIFGLLLWWA, VGWKKALVIGLAQAMALIPGT, AAARFSFLMSVPVSLGAAILV, ALGLGIVVSFIAAYVCIHYFL, and MTPFVIYRLVLGAVLCGFIFL.

The protein belongs to the UppP family.

The protein resides in the cell inner membrane. The catalysed reaction is di-trans,octa-cis-undecaprenyl diphosphate + H2O = di-trans,octa-cis-undecaprenyl phosphate + phosphate + H(+). Functionally, catalyzes the dephosphorylation of undecaprenyl diphosphate (UPP). Confers resistance to bacitracin. The chain is Undecaprenyl-diphosphatase from Shewanella piezotolerans (strain WP3 / JCM 13877).